We begin with the raw amino-acid sequence, 90 residues long: RNA-binding protein Hfq (90 aa).

A Sm domain is found at 9-68 (DPFLNALRRERVPVSIYLVNGIKLQGQVESFDQFVILLKNTVSQMVYKHAISTVVPARPF).

Belongs to the Hfq family. Homohexamer.

Functionally, RNA chaperone that binds small regulatory RNA (sRNAs) and mRNAs to facilitate mRNA translational regulation in response to envelope stress, environmental stress and changes in metabolite concentrations. Also binds with high specificity to tRNAs. The chain is RNA-binding protein Hfq from Shewanella baltica (strain OS155 / ATCC BAA-1091).